Here is a 350-residue protein sequence, read N- to C-terminus: Anthranilate phosphoribosyltransferase (350 aa).

5-phospho-alpha-D-ribose 1-diphosphate is bound by residues G94, 97–98 (GD), T102, 104–107 (NVST), 122–130 (KHGNRSVSS), and S134. G94 contributes to the anthranilate binding site. Mg(2+) is bound at residue S106. Residue N125 participates in anthranilate binding. R180 serves as a coordination point for anthranilate. Mg(2+) is bound by residues D239 and E240.

Belongs to the anthranilate phosphoribosyltransferase family. In terms of assembly, homodimer. Requires Mg(2+) as cofactor.

The enzyme catalyses N-(5-phospho-beta-D-ribosyl)anthranilate + diphosphate = 5-phospho-alpha-D-ribose 1-diphosphate + anthranilate. The protein operates within amino-acid biosynthesis; L-tryptophan biosynthesis; L-tryptophan from chorismate: step 2/5. In terms of biological role, catalyzes the transfer of the phosphoribosyl group of 5-phosphorylribose-1-pyrophosphate (PRPP) to anthranilate to yield N-(5'-phosphoribosyl)-anthranilate (PRA). The protein is Anthranilate phosphoribosyltransferase of Pelobacter propionicus (strain DSM 2379 / NBRC 103807 / OttBd1).